Here is a 221-residue protein sequence, read N- to C-terminus: Prolactin-3B1 (221 aa).

An N-terminal signal peptide occupies residues 1–30 (MQLPLTPLSFSGTLLLMAMSNFLLWEHVTS). 2 disulfide bridges follow: Cys81–Cys196 and Cys213–Cys221.

The protein belongs to the somatotropin/prolactin family.

The protein localises to the secreted. This chain is Prolactin-3B1 (PRL3B1), found in Mesocricetus auratus (Golden hamster).